The primary structure comprises 467 residues: Chromosomal replication initiator protein DnaA (467 aa).

The tract at residues 1–90 is domain I, interacts with DnaA modulators; sequence MSLSLWQQCL…KPVTQTPQAA (90 aa). Positions 91-130 are domain II; it reads VTSNVAAPALVAQTQPQRAAPSTRSGWDNVPAPAEPTYRS. Residues 131 to 347 are domain III, AAA+ region; the sequence is NVNVKHTFDN…GALNRVIANA (217 aa). Gly175, Gly177, Lys178, and Thr179 together coordinate ATP. Residues 348-467 form a domain IV, binds dsDNA region; it reads NFTGRAITID…FSNLIRTLSS (120 aa).

It belongs to the DnaA family. In terms of assembly, oligomerizes as a right-handed, spiral filament on DNA at oriC.

It is found in the cytoplasm. Plays an essential role in the initiation and regulation of chromosomal replication. ATP-DnaA binds to the origin of replication (oriC) to initiate formation of the DNA replication initiation complex once per cell cycle. Binds the DnaA box (a 9 base pair repeat at the origin) and separates the double-stranded (ds)DNA. Forms a right-handed helical filament on oriC DNA; dsDNA binds to the exterior of the filament while single-stranded (ss)DNA is stabiized in the filament's interior. The ATP-DnaA-oriC complex binds and stabilizes one strand of the AT-rich DNA unwinding element (DUE), permitting loading of DNA polymerase. After initiation quickly degrades to an ADP-DnaA complex that is not apt for DNA replication. Binds acidic phospholipids. The chain is Chromosomal replication initiator protein DnaA from Shigella dysenteriae serotype 1 (strain Sd197).